We begin with the raw amino-acid sequence, 226 residues long: ATP synthase F(0) complex subunit a (226 aa).

Transmembrane regions (helical) follow at residues 12–32 (PTMM…ILFP), 68–88 (WTLM…LGLL), 97–117 (QLSM…VTGF), 138–158 (IPML…ALAV), 164–184 (ITAG…LMSI), and 189–209 (ASIT…VALI).

The protein belongs to the ATPase A chain family. In terms of assembly, component of the ATP synthase complex composed at least of ATP5F1A/subunit alpha, ATP5F1B/subunit beta, ATP5MC1/subunit c (homooctomer), MT-ATP6/subunit a, MT-ATP8/subunit 8, ATP5ME/subunit e, ATP5MF/subunit f, ATP5MG/subunit g, ATP5MK/subunit k, ATP5MJ/subunit j, ATP5F1C/subunit gamma, ATP5F1D/subunit delta, ATP5F1E/subunit epsilon, ATP5PF/subunit F6, ATP5PB/subunit b, ATP5PD/subunit d, ATP5PO/subunit OSCP. ATP synthase complex consists of a soluble F(1) head domain (subunits alpha(3) and beta(3)) - the catalytic core - and a membrane F(0) domain - the membrane proton channel (subunits c, a, 8, e, f, g, k and j). These two domains are linked by a central stalk (subunits gamma, delta, and epsilon) rotating inside the F1 region and a stationary peripheral stalk (subunits F6, b, d, and OSCP). Interacts with DNAJC30; interaction is direct.

It localises to the mitochondrion inner membrane. The catalysed reaction is H(+)(in) = H(+)(out). Subunit a, of the mitochondrial membrane ATP synthase complex (F(1)F(0) ATP synthase or Complex V) that produces ATP from ADP in the presence of a proton gradient across the membrane which is generated by electron transport complexes of the respiratory chain. ATP synthase complex consist of a soluble F(1) head domain - the catalytic core - and a membrane F(1) domain - the membrane proton channel. These two domains are linked by a central stalk rotating inside the F(1) region and a stationary peripheral stalk. During catalysis, ATP synthesis in the catalytic domain of F(1) is coupled via a rotary mechanism of the central stalk subunits to proton translocation. With the subunit c (ATP5MC1), forms the proton-conducting channel in the F(0) domain, that contains two crucial half-channels (inlet and outlet) that facilitate proton movement from the mitochondrial intermembrane space (IMS) into the matrix. Protons are taken up via the inlet half-channel and released through the outlet half-channel, following a Grotthuss mechanism. In Dasypus novemcinctus (Nine-banded armadillo), this protein is ATP synthase F(0) complex subunit a.